The following is a 417-amino-acid chain: Serine hydroxymethyltransferase (417 aa).

Position 54 is an N6-acetyllysine (Lys-54). (6S)-5,6,7,8-tetrahydrofolate-binding positions include Leu-121 and 125–127; that span reads GHL. Residue Lys-229 is modified to N6-(pyridoxal phosphate)lysine. 3 positions are modified to N6-acetyllysine: Lys-250, Lys-285, and Lys-354. 355–357 lines the (6S)-5,6,7,8-tetrahydrofolate pocket; that stretch reads SPF. Residue Lys-375 is modified to N6-acetyllysine.

This sequence belongs to the SHMT family. In terms of assembly, homodimer. Pyridoxal 5'-phosphate serves as cofactor.

Its subcellular location is the cytoplasm. It carries out the reaction (6R)-5,10-methylene-5,6,7,8-tetrahydrofolate + glycine + H2O = (6S)-5,6,7,8-tetrahydrofolate + L-serine. It participates in one-carbon metabolism; tetrahydrofolate interconversion. It functions in the pathway amino-acid biosynthesis; glycine biosynthesis; glycine from L-serine: step 1/1. Its function is as follows. Catalyzes the reversible interconversion of serine and glycine with tetrahydrofolate (THF) serving as the one-carbon carrier. This reaction serves as the major source of one-carbon groups required for the biosynthesis of purines, thymidylate, methionine, and other important biomolecules. Also exhibits THF-independent aldolase activity toward beta-hydroxyamino acids, producing glycine and aldehydes, via a retro-aldol mechanism. In Escherichia coli O17:K52:H18 (strain UMN026 / ExPEC), this protein is Serine hydroxymethyltransferase.